Consider the following 660-residue polypeptide: DNA mismatch repair protein MutL (660 aa).

The segment covering 341–355 (SFQSDGAPPTQQLSS) has biased composition (polar residues). Disordered stretches follow at residues 341-362 (SFQSDGAPPTQQLSSDVREKAE) and 378-398 (ALSPTKQELPKSPERSERVER). Basic and acidic residues predominate over residues 385–398 (ELPKSPERSERVER).

The protein belongs to the DNA mismatch repair MutL/HexB family.

Its function is as follows. This protein is involved in the repair of mismatches in DNA. It is required for dam-dependent methyl-directed DNA mismatch repair. May act as a 'molecular matchmaker', a protein that promotes the formation of a stable complex between two or more DNA-binding proteins in an ATP-dependent manner without itself being part of a final effector complex. This is DNA mismatch repair protein MutL from Heliobacterium modesticaldum (strain ATCC 51547 / Ice1).